Consider the following 147-residue polypeptide: Sec-independent protein translocase protein TatB (147 aa).

Residues Met1 to Gly21 form a helical membrane-spanning segment. Residues Ala117–Ala147 form a disordered region.

The protein belongs to the TatB family. In terms of assembly, the Tat system comprises two distinct complexes: a TatABC complex, containing multiple copies of TatA, TatB and TatC subunits, and a separate TatA complex, containing only TatA subunits. Substrates initially bind to the TatABC complex, which probably triggers association of the separate TatA complex to form the active translocon.

It localises to the cell inner membrane. Part of the twin-arginine translocation (Tat) system that transports large folded proteins containing a characteristic twin-arginine motif in their signal peptide across membranes. Together with TatC, TatB is part of a receptor directly interacting with Tat signal peptides. TatB may form an oligomeric binding site that transiently accommodates folded Tat precursor proteins before their translocation. This chain is Sec-independent protein translocase protein TatB, found in Aromatoleum aromaticum (strain DSM 19018 / LMG 30748 / EbN1) (Azoarcus sp. (strain EbN1)).